A 62-amino-acid chain; its full sequence is Chromatin protein Cren7 2 (62 aa).

It belongs to the Cren7 family. In terms of assembly, monomer. Post-translationally, methylated at multiple sites, to varying extents.

It is found in the chromosome. The protein localises to the cytoplasm. Functionally, a chromatin protein, binds double-stranded DNA without sequence specificity. Constrains negative DNA supercoils. The protein is Chromatin protein Cren7 2 (cren7-2) of Hyperthermus butylicus (strain DSM 5456 / JCM 9403 / PLM1-5).